The primary structure comprises 843 residues: MSLISAVEDRDIHNIGKTSGGGSRTSSITSSKKSLKHGSKSLRKPKVYQTTGEPLSREALYKAKLKYGVYQSPAQSYSIGVSDAHAASDKAANLAHDNQTTVEAYKRMFIDPNATKAASKMGPKVVRNNSITSATSKTSKESQTKRKSKESPGAAASKAYSMTMETTSLSSQTNSRSYSITSASSVLSGASGSFNSTVNPKPKTLNLEKVLVGAEKKAESRIKERWEPEKTNFQYGVKTDEHGNLNQFSFSNEMMNNIMAKVDAPKAQDLQKVKKVSAEKEAKSMKFALGAANAVKDMHPGADIDKSIALKAQKRETYLSQLTSQQVLTLARANVDRQLDIIEKSDMHRKLFTNMEYNKAAVAVAQSNHQKKTEFHNKINMGGGLFLSPEDITKIASGLISPVLGEVSERAEAQRAMDEEIAERTEAYNKSLNEWETMERSIISNDAKVLTTTANRHQTEKKTSQEKIKASFDALVARMDTKVAERETLLEDTKNKEIEFKKQMQQELKDEKARLDQDLEEWGKKCEQDITEARKEQEELLKPYHDDLANAEAEHKTLVEERDAINAEISRLQDAIVDHKRKISGYGNDLDAQKNRNIREDDKLLELGQTKESLESHLNDDVIILANKAKEQAELSTKEARLKQLEVDSLINERKSELNATEIELKKEKLNLLEAMKDVASARGDDKIAEEKVKKLIGMTSEEYLTQNKSVEKNVEDLPTQLEKIEEGDELKKEEIVGAETKNSGGDGVPVSTGAKEAAETSSAVQTKEPEEKISIGNKSSGKEDANDCESAEHSKEISVSQKAGNNKSLGVSPDSLEHTFSGFSQGSSIEDDQDAISNQEKK.

A disordered region spans residues 1 to 53 (MSLISAVEDRDIHNIGKTSGGGSRTSSITSSKKSLKHGSKSLRKPKVYQTTGE). Ser-2 is modified (N-acetylserine). At Ser-2 the chain carries Phosphoserine. Basic residues predominate over residues 33 to 46 (KSLKHGSKSLRKPK). Residues Ser-88 and Ser-130 each carry the phosphoserine modification. The disordered stretch occupies residues 120-174 (KMGPKVVRNNSITSATSKTSKESQTKRKSKESPGAAASKAYSMTMETTSLSSQTN). 2 stretches are compositionally biased toward polar residues: residues 127 to 137 (RNNSITSATSK) and 163 to 174 (TMETTSLSSQTN). Residues Ser-182, Ser-401, Ser-584, and Ser-710 each carry the phosphoserine modification. A disordered region spans residues 718–843 (LPTQLEKIEE…QDAISNQEKK (126 aa)). Thr-720 is subject to Phosphothreonine. Residues Ser-763 and Ser-775 each carry the phosphoserine modification. Residues 781-797 (SGKEDANDCESAEHSKE) show a composition bias toward basic and acidic residues. Over residues 798-810 (ISVSQKAGNNKSL) the composition is skewed to polar residues. 4 positions are modified to phosphoserine: Ser-816, Ser-828, Ser-829, and Ser-838.

Belongs to the EIS1 family.

The protein localises to the cytoplasmic granule. It localises to the cell membrane. In terms of biological role, required for normal formation of eisosomes, large cytoplasmic protein assemblies that localize to specialized domains on plasma membrane and mark the site of endocytosis. The chain is Eisosome protein 1 (EIS1) from Saccharomyces cerevisiae (strain YJM789) (Baker's yeast).